The primary structure comprises 500 residues: Cytochrome P450 monooxygenase ausR (500 aa).

A helical membrane pass occupies residues 15–35 (GVGLYILWTVAVLFVIFKLLA). Cysteine 439 provides a ligand contact to heme.

The protein belongs to the cytochrome P450 family. The cofactor is heme.

The protein localises to the membrane. Its pathway is secondary metabolite biosynthesis; terpenoid biosynthesis. In terms of biological role, cytochrome P450 monooxygenase; part of the gene cluster that mediates the biosynthesis of calidodehydroaustin, a fungal meroterpenoid. The first step of the pathway is the synthesis of 3,5-dimethylorsellinic acid by the polyketide synthase ausA. 3,5-dimethylorsellinic acid is then prenylated by the polyprenyl transferase ausN. Further epoxidation by the FAD-dependent monooxygenase ausM and cyclization by the probable terpene cyclase ausL lead to the formation of protoaustinoid A. Protoaustinoid A is then oxidized to spiro-lactone preaustinoid A3 by the combined action of the FAD-binding monooxygenases ausB and ausC, and the dioxygenase ausE. Acid-catalyzed keto-rearrangement and ring contraction of the tetraketide portion of preaustinoid A3 by ausJ lead to the formation of preaustinoid A4. The aldo-keto reductase ausK, with the help of ausH, is involved in the next step by transforming preaustinoid A4 into isoaustinone which is in turn hydroxylated by the P450 monooxygenase ausI to form austinolide. The cytochrome P450 monooxygenase ausG modifies austinolide to austinol. Austinol is further acetylated to austin by the O-acetyltransferase ausP, which spontaneously changes to dehydroaustin. The cytochrome P450 monooxygenase ausR then converts dehydroaustin is into 7-dehydrodehydroaustin. The hydroxylation catalyzed by ausR permits the O-acetyltransferase ausQ to add an additional acetyl group to the molecule, leading to the formation of acetoxydehydroaustin. The short chain dehydrogenase ausT catalyzes the reduction of the double bond present between carbon atoms 1 and 2 to convert 7-dehydrodehydroaustin into 1,2-dihydro-7-hydroxydehydroaustin. AusQ catalyzes not only an acetylation reaction but also the addition of the PKS ausV diketide product to 1,2-dihydro-7-hydroxydehydroaustin, forming precalidodehydroaustin. Finally, the iron/alpha-ketoglutarate-dependent dioxygenase converts precalidodehydroaustin into calidodehydroaustin. The chain is Cytochrome P450 monooxygenase ausR from Aspergillus calidoustus.